We begin with the raw amino-acid sequence, 1044 residues long: Spindle assembly checkpoint serine/threonine-protein kinase bub1 (1044 aa).

Residues 36–204 form the BUB1 N-terminal domain; sequence FQEELDIIEE…SSPFPPPRIV (169 aa). 5 disordered regions span residues 209-259, 317-343, 404-446, 484-555, and 685-705; these read PVSS…PLLY, VHHD…TPTR, ESLE…SQEE, KNSN…DSNS, and IKPK…SLDG. Residues 223-239 show a composition bias toward polar residues; that stretch reads QVFSDASSSRDSQNASD. Residues 430–442 show a composition bias toward polar residues; sequence NSSNSGATSLTGR. Low complexity predominate over residues 504–518; it reads STLQEETATGTTSTT. Positions 544-555 are enriched in polar residues; that stretch reads RSPQYSTVDSNS. Thr550 is subject to Phosphothreonine. The Protein kinase domain maps to 718-1044; it reads LSVISKLGQG…LLKSIEKRKI (327 aa). The ATP site is built by Ala728, Phe729, Ala730, Lys762, and Asp809. Asp861 acts as the Proton acceptor in catalysis. Asp865, Asn866, and Asp900 together coordinate ATP.

This sequence belongs to the protein kinase superfamily. Ser/Thr protein kinase family. BUB1 subfamily. As to quaternary structure, part of the BUB1-BUB3 complex, composed of bub1 and bub3. Interacts with spc7 (when phosphorylated on MELT motifs); to recruit the bub1-bub3 complex to kinetochores. Interacts with mad3. Autophosphorylated.

It localises to the nucleus. The protein resides in the chromosome. It is found in the centromere. Its subcellular location is the kinetochore. It carries out the reaction L-seryl-[protein] + ATP = O-phospho-L-seryl-[protein] + ADP + H(+). The catalysed reaction is L-threonyl-[protein] + ATP = O-phospho-L-threonyl-[protein] + ADP + H(+). In terms of biological role, involved in mitotic spindle assembly checkpoint signaling, a process that delays anaphase until chromosomes are bioriented on the spindle, and in the repair of incorrect mitotic kinetochore-spindle microtubule attachments. Acts as a kinetochore scaffold for the recruitment of other spindle assembly checkpoint components. This Schizosaccharomyces pombe (strain 972 / ATCC 24843) (Fission yeast) protein is Spindle assembly checkpoint serine/threonine-protein kinase bub1.